Here is a 92-residue protein sequence, read N- to C-terminus: Large ribosomal subunit protein uL24 (92 aa).

The protein belongs to the universal ribosomal protein uL24 family. Part of the 50S ribosomal subunit.

In terms of biological role, one of two assembly initiator proteins, it binds directly to the 5'-end of the 23S rRNA, where it nucleates assembly of the 50S subunit. Its function is as follows. One of the proteins that surrounds the polypeptide exit tunnel on the outside of the subunit. This Opitutus terrae (strain DSM 11246 / JCM 15787 / PB90-1) protein is Large ribosomal subunit protein uL24.